The primary structure comprises 293 residues: Neugrin (293 aa).

Positions 1–18 (MALSLSLFLGGRVRTSLA) are cleaved as a signal peptide. Ser41 carries the phosphoserine modification. Disordered regions lie at residues 177–210 (DEVSSKSQNHSTALKVAKSHPHSTDAQKKREGRD) and 224–254 (TTALGHQRELQKSATSDSEATGRAGSDTLPS). Asn185 carries N-linked (GlcNAc...) asparagine glycosylation. Residues 198 to 210 (HSTDAQKKREGRD) show a composition bias toward basic and acidic residues.

The protein belongs to the neugrin family. As to quaternary structure, forms a regulatory protein-RNA complex, consisting of RCC1L, NGRN, RPUSD3, RPUSD4, TRUB2, FASTKD2 and 16S mt-rRNA. Interacts with 16S mt-rRNA; this interaction is direct. Expressed in heart, brain, liver and kidney. In brain, mainly expressed in neurons rather than glial cells.

It is found in the nucleus. It localises to the secreted. The protein localises to the mitochondrion membrane. Plays an essential role in mitochondrial ribosome biogenesis. As a component of a functional protein-RNA module, consisting of RCC1L, NGRN, RPUSD3, RPUSD4, TRUB2, FASTKD2 and 16S mitochondrial ribosomal RNA (16S mt-rRNA), controls 16S mt-rRNA abundance and is required for intra-mitochondrial translation of core subunits of the oxidative phosphorylation system. The chain is Neugrin (Ngrn) from Mus musculus (Mouse).